The following is a 621-amino-acid chain: MKNANLSFKGQIPFNEEFDDIYFNTEKPWLESEFVFTSALDEIWQSKDSFIVAETGFGAGLNFFTLCKKFKNSSKKLHFVSIEKSPIKKEDLLKIYENLGIFKAYVKKLVSLYPPLISGIHRINFAPNITLDLCYGEADQILPELDFAADIWFLDGFAPSKNGSIWSEDVFKQIARLSRVGTIARTYSCAKIVKVGLKNAGFLLSLKEGYARKRQMSSAVLEKKDENLKDAWFARCEPVGSVNGKTALVIGTGVAGLATAGELAKNGFKVVIAEAKSEVATNGSGNHCGALMPLVTKPGVNLGRMHINAFLQAVRFYKANLPKSLIKFNGCIDYAFDDELVKRYSSWQDQSAEDLFKFNESLKPYPGIFIKEAAYARPREICKFLSSNFEILFNHEYESRAHLQNGKISVKFKNKKSLETDILVFCTGSKSSEIFKDYDMQISSVRGQVTHLKPVLKNELPLSAKGYICPAVKGVQVIGATYARNEICDTPKDEDNAKNLSDVSEFFDTTKAAIIGSRVGYRSYSGDRFPIIGALHDEEFYKQNYKGLFWSKNKDNNPKASYEKNVFVNFAHGSRGLGTAILGANLITDLVLARPLCIERSLFFELHPARFLIRKLKKGLK.

Residues 1-222 (MKNANLSFKG…KRQMSSAVLE (222 aa)) form a tRNA (mnm(5)s(2)U34)-methyltransferase region. The FAD-dependent cmnm(5)s(2)U34 oxidoreductase stretch occupies residues 250 to 621 (IGTGVAGLAT…LIRKLKKGLK (372 aa)).

In the N-terminal section; belongs to the methyltransferase superfamily. tRNA (mnm(5)s(2)U34)-methyltransferase family. The protein in the C-terminal section; belongs to the DAO family. Requires FAD as cofactor.

The protein resides in the cytoplasm. It carries out the reaction 5-aminomethyl-2-thiouridine(34) in tRNA + S-adenosyl-L-methionine = 5-methylaminomethyl-2-thiouridine(34) in tRNA + S-adenosyl-L-homocysteine + H(+). In terms of biological role, catalyzes the last two steps in the biosynthesis of 5-methylaminomethyl-2-thiouridine (mnm(5)s(2)U) at the wobble position (U34) in tRNA. Catalyzes the FAD-dependent demodification of cmnm(5)s(2)U34 to nm(5)s(2)U34, followed by the transfer of a methyl group from S-adenosyl-L-methionine to nm(5)s(2)U34, to form mnm(5)s(2)U34. The sequence is that of tRNA 5-methylaminomethyl-2-thiouridine biosynthesis bifunctional protein MnmC from Campylobacter concisus (strain 13826).